Reading from the N-terminus, the 101-residue chain is Small ribosomal subunit protein uS14 (101 aa).

It belongs to the universal ribosomal protein uS14 family. As to quaternary structure, part of the 30S ribosomal subunit. Contacts proteins S3 and S10.

In terms of biological role, binds 16S rRNA, required for the assembly of 30S particles and may also be responsible for determining the conformation of the 16S rRNA at the A site. The polypeptide is Small ribosomal subunit protein uS14 (Protochlamydia amoebophila (strain UWE25)).